The sequence spans 413 residues: Sulfoquinovose isomerase (413 aa).

6-sulfo-beta-D-quinovose-binding residues include R55, Y111, N172, H176, and R238. The Proton donor/acceptor role is filled by H248. 6-sulfo-beta-D-quinovose is bound by residues E251, Q362, Q379, and H383. H383 functions as the Proton donor/acceptor in the catalytic mechanism.

It belongs to the N-acylglucosamine 2-epimerase family. Homohexamer.

The catalysed reaction is 6-sulfo-beta-D-quinovose = 6-deoxy-6-sulfo-D-fructose. It carries out the reaction 6-sulfo-beta-D-quinovose = 6-sulfo-D-rhamnose. Significantly inhibited by Cu(2+), Fe(3+) and Co(2+). Partially inhibited by Mg(2+), Ca(2+) and Mn(2+). Also inhibited by ATP, ADP, dATP, TTP and GTP. In terms of biological role, catalyzes the isomerization of sulfoquinovose (SQ) to 6-deoxy-6-sulfo-D-fructose (SF). Can also catalyze the interconversion of SQ and sulforhamnose (SR). Has a clear preference for beta-SQ and little-to-no activity on alpha-SQ. In vitro, can also catalyze the interconversion of mannose, fructose and glucose, or lyxose and xylulose, but has extremely low activity with glucose. The chain is Sulfoquinovose isomerase (yihS) from Escherichia coli (strain K12).